Here is a 567-residue protein sequence, read N- to C-terminus: MTEISRQAYADMFGPTTGDRVRLADTELWIEVENDLTAYGEEVKFGGGKVIRDGMGQGQMRARACVDLVITNALIVDHWGIVKADIGIKDGRIFAIGKAGNPDIQPNVTIPIGVGTEAIAGEGKIVTAGGVDTHIHWICPQQAEEALVSGVTTMIGGGTGPAAGTNATTCTPGPWYIARMLQAADSLPVNIGFLGKGNGSNPDALREQIAAGAIGLKIHEDWGATPAAIDCALTVAEEMDIQVALHSDTLNESGFVEDTLAAIGDRTIHTFHTEGAGGGHAPDIITACAHPHILPSSTNPTLPYTVNTIDEHLDMLMVCHHLDPDIAEDVAFAESRIRRETIAAEDVLHDLGAFSLTSSDSQAMGRVGEVILRTWQVAHRMKVQRGPLAEETGDNDNQRVKRYIAKYTINPALTHGIAHEVGSVEAGKLADLVLWSPAFFGVKPATLIKGGMIVCAPMGDINASIPTPQPVHYRPMFGALGAARHHCRLTFLSQAAVENGIAQQLNLRSATAVVKGCRTVKKADMIHNSLQPNITVDAQTYEVRIDGEPITSEPADVLPMAQRYFLF.

Residues 129–567 (GGVDTHIHWI…LPMAQRYFLF (439 aa)) enclose the Urease domain. Residues histidine 134, histidine 136, and lysine 217 each coordinate Ni(2+). Residue lysine 217 is modified to N6-carboxylysine. Residue histidine 219 coordinates substrate. Ni(2+) contacts are provided by histidine 246 and histidine 272. The Proton donor role is filled by histidine 320. Aspartate 360 lines the Ni(2+) pocket.

The protein belongs to the metallo-dependent hydrolases superfamily. Urease alpha subunit family. In terms of assembly, heterotrimer of UreA (gamma), UreB (beta) and UreC (alpha) subunits. Three heterotrimers associate to form the active enzyme. Ni cation serves as cofactor. Carboxylation allows a single lysine to coordinate two nickel ions.

It is found in the cytoplasm. The enzyme catalyses urea + 2 H2O + H(+) = hydrogencarbonate + 2 NH4(+). Its pathway is nitrogen metabolism; urea degradation; CO(2) and NH(3) from urea (urease route): step 1/1. The polypeptide is Urease subunit alpha (Citrobacter koseri (strain ATCC BAA-895 / CDC 4225-83 / SGSC4696)).